Consider the following 355-residue polypeptide: tRNA-specific 2-thiouridylase MnmA (355 aa).

Residues 6-13 (AMSGGVDS) and methionine 32 contribute to the ATP site. Cysteine 93 serves as the catalytic Nucleophile. An intrachain disulfide couples cysteine 93 to cysteine 191. Residue glycine 117 participates in ATP binding. The interval 140–142 (KDQ) is interaction with tRNA. Catalysis depends on cysteine 191, which acts as the Cysteine persulfide intermediate. The interval 296–297 (RY) is interaction with tRNA.

The protein belongs to the MnmA/TRMU family.

It localises to the cytoplasm. The enzyme catalyses S-sulfanyl-L-cysteinyl-[protein] + uridine(34) in tRNA + AH2 + ATP = 2-thiouridine(34) in tRNA + L-cysteinyl-[protein] + A + AMP + diphosphate + H(+). Its function is as follows. Catalyzes the 2-thiolation of uridine at the wobble position (U34) of tRNA, leading to the formation of s(2)U34. This is tRNA-specific 2-thiouridylase MnmA from Pelobacter propionicus (strain DSM 2379 / NBRC 103807 / OttBd1).